The chain runs to 202 residues: Thymidylate kinase (202 aa).

7 to 14 contributes to the ATP binding site; that stretch reads GTEGVGKT.

It belongs to the thymidylate kinase family.

The catalysed reaction is dTMP + ATP = dTDP + ADP. Its function is as follows. Phosphorylation of dTMP to form dTDP in both de novo and salvage pathways of dTTP synthesis. The protein is Thymidylate kinase of Acinetobacter baylyi (strain ATCC 33305 / BD413 / ADP1).